The sequence spans 294 residues: uncharacterized protein (294 aa).

This is an uncharacterized protein from Halobacterium salinarum (strain ATCC 700922 / JCM 11081 / NRC-1) (Halobacterium halobium).